A 508-amino-acid polypeptide reads, in one-letter code: 3-octaprenyl-4-hydroxybenzoate carboxy-lyase (508 aa).

Asn178 is a Mn(2+) binding site. Prenylated FMN is bound by residues 181–183, 195–197, and 200–201; these read IYR, RWL, and RG. Glu244 is a binding site for Mn(2+). Catalysis depends on Asp303, which acts as the Proton donor.

The protein belongs to the UbiD family. Homohexamer. Requires prenylated FMN as cofactor. It depends on Mn(2+) as a cofactor.

It is found in the cell membrane. It carries out the reaction a 4-hydroxy-3-(all-trans-polyprenyl)benzoate + H(+) = a 2-(all-trans-polyprenyl)phenol + CO2. It participates in cofactor biosynthesis; ubiquinone biosynthesis. Catalyzes the decarboxylation of 3-octaprenyl-4-hydroxy benzoate to 2-octaprenylphenol, an intermediate step in ubiquinone biosynthesis. The polypeptide is 3-octaprenyl-4-hydroxybenzoate carboxy-lyase (Cupriavidus taiwanensis (strain DSM 17343 / BCRC 17206 / CCUG 44338 / CIP 107171 / LMG 19424 / R1) (Ralstonia taiwanensis (strain LMG 19424))).